The sequence spans 474 residues: Sestrin homolog (474 aa).

The protein belongs to the sestrin family.

The protein resides in the nucleus. It localises to the cytoplasm. Its function is as follows. May function as a negative feedback regulator of TOR function. This is Sestrin homolog from Caenorhabditis elegans.